Here is a 416-residue protein sequence, read N- to C-terminus: Pectin acetylesterase 10 (416 aa).

The N-terminal stretch at 1 to 20 (MRKLFLLGFIVAGLVLGNEA) is a signal peptide. N-linked (GlcNAc...) asparagine glycosylation is present at asparagine 27. Active-site charge relay system residues include serine 198, aspartate 294, and histidine 361.

Belongs to the pectinacetylesterase family.

It is found in the secreted. The protein resides in the cell wall. Its function is as follows. Hydrolyzes acetyl esters in homogalacturonan regions of pectin. In type I primary cell wall, galacturonic acid residues of pectin can be acetylated at the O-2 and O-3 positions. Decreasing the degree of acetylation of pectin gels in vitro alters their physical properties. The chain is Pectin acetylesterase 10 from Arabidopsis thaliana (Mouse-ear cress).